The chain runs to 557 residues: D-arabinono-1,4-lactone oxidase (557 aa).

Residues 26–209 (FFCKPQAIFQ…THVTLRTIPK (184 aa)) form the FAD-binding PCMH-type domain. Histidine 63 carries the post-translational modification Pros-8alpha-FAD histidine.

The protein belongs to the oxygen-dependent FAD-linked oxidoreductase family. FAD serves as cofactor.

Its subcellular location is the mitochondrion membrane. It carries out the reaction D-arabinono-1,4-lactone + O2 = dehydro-D-arabinono-1,4-lactone + H2O2 + H(+). Its pathway is cofactor biosynthesis; D-erythroascorbate biosynthesis; dehydro-D-arabinono-1,4-lactone from D-arabinose: step 2/2. In Debaryomyces hansenii (strain ATCC 36239 / CBS 767 / BCRC 21394 / JCM 1990 / NBRC 0083 / IGC 2968) (Yeast), this protein is D-arabinono-1,4-lactone oxidase (ALO1).